Consider the following 711-residue polypeptide: DNA topoisomerase 3 (711 aa).

The Toprim domain maps to 2-135; sequence KSLILAEKPS…IRRLWISSVT (134 aa). The Mg(2+) site is built by Glu-8 and Asp-104. A Topo IA-type catalytic domain is found at 152–580; sequence YNDLYYAALA…EMKDFTKDVV (429 aa). The segment at 186 to 191 is interaction with DNA; sequence SLGRVQ. Tyr-305 serves as the catalytic O-(5'-phospho-DNA)-tyrosine intermediate. The disordered stretch occupies residues 691 to 711; that stretch reads MNKNEGLDNNPFKDALKNLNL.

The protein belongs to the type IA topoisomerase family. Requires Mg(2+) as cofactor.

The enzyme catalyses ATP-independent breakage of single-stranded DNA, followed by passage and rejoining.. Its function is as follows. Releases the supercoiling and torsional tension of DNA, which is introduced during the DNA replication and transcription, by transiently cleaving and rejoining one strand of the DNA duplex. Introduces a single-strand break via transesterification at a target site in duplex DNA. The scissile phosphodiester is attacked by the catalytic tyrosine of the enzyme, resulting in the formation of a DNA-(5'-phosphotyrosyl)-enzyme intermediate and the expulsion of a 3'-OH DNA strand. The free DNA strand then undergoes passage around the unbroken strand, thus removing DNA supercoils. Finally, in the religation step, the DNA 3'-OH attacks the covalent intermediate to expel the active-site tyrosine and restore the DNA phosphodiester backbone. This chain is DNA topoisomerase 3, found in Staphylococcus aureus (strain Mu50 / ATCC 700699).